The chain runs to 312 residues: Urease accessory protein UreD (312 aa).

A disordered region spans residues 1-50 (MRPLAPDARCAPSRPGRGPWYARRPVTTPSDPPAALREPPPPARRAGKAG).

This sequence belongs to the UreD family. In terms of assembly, ureD, UreF and UreG form a complex that acts as a GTP-hydrolysis-dependent molecular chaperone, activating the urease apoprotein by helping to assemble the nickel containing metallocenter of UreC. The UreE protein probably delivers the nickel.

It localises to the cytoplasm. Functionally, required for maturation of urease via the functional incorporation of the urease nickel metallocenter. This is Urease accessory protein UreD from Sorangium cellulosum (strain So ce56) (Polyangium cellulosum (strain So ce56)).